Consider the following 399-residue polypeptide: Tyrosine--tRNA ligase (399 aa).

Positions 44–53 (PTAPDLHLGH) match the 'HIGH' region motif. Residues 229-233 (KMSKS) carry the 'KMSKS' region motif. Residue Lys-232 coordinates ATP. Residues 338 to 398 (ISITKALVDC…GKRKFAKLKV (61 aa)) form the S4 RNA-binding domain.

It belongs to the class-I aminoacyl-tRNA synthetase family. TyrS type 2 subfamily. Homodimer.

It localises to the cytoplasm. It carries out the reaction tRNA(Tyr) + L-tyrosine + ATP = L-tyrosyl-tRNA(Tyr) + AMP + diphosphate + H(+). Its function is as follows. Catalyzes the attachment of tyrosine to tRNA(Tyr) in a two-step reaction: tyrosine is first activated by ATP to form Tyr-AMP and then transferred to the acceptor end of tRNA(Tyr). The protein is Tyrosine--tRNA ligase of Sulfurimonas denitrificans (strain ATCC 33889 / DSM 1251) (Thiomicrospira denitrificans (strain ATCC 33889 / DSM 1251)).